A 248-amino-acid chain; its full sequence is tRNA (guanine-N(1)-)-methyltransferase (248 aa).

S-adenosyl-L-methionine contacts are provided by residues Gly-113 and 133–138; that span reads VGDYVL.

This sequence belongs to the RNA methyltransferase TrmD family. In terms of assembly, homodimer.

Its subcellular location is the cytoplasm. The catalysed reaction is guanosine(37) in tRNA + S-adenosyl-L-methionine = N(1)-methylguanosine(37) in tRNA + S-adenosyl-L-homocysteine + H(+). Specifically methylates guanosine-37 in various tRNAs. This Shewanella oneidensis (strain ATCC 700550 / JCM 31522 / CIP 106686 / LMG 19005 / NCIMB 14063 / MR-1) protein is tRNA (guanine-N(1)-)-methyltransferase.